A 725-amino-acid polypeptide reads, in one-letter code: Sodium/hydrogen exchanger 7 (725 aa).

The segment at 1-20 (MEPGDAARPGSGRATGAPPP) is disordered. The Cytoplasmic portion of the chain corresponds to 1–21 (MEPGDAARPGSGRATGAPPPR). A helical membrane pass occupies residues 22–42 (LLLLPLLLGWGLRVAAAASAS). Over 43 to 70 (SSGAAAEDSSAMEELATEKEAEESHRQD) the chain is Lumenal. A helical transmembrane segment spans residues 71-91 (SVSLLTFILLLTLTILTIWLF). Residues 92–95 (KHRR) are Cytoplasmic-facing. A helical transmembrane segment spans residues 96-116 (VRFLHETGLAMIYGLIVGVIL). The Lumenal segment spans residues 117-175 (RYGTPATSGRDKSLSCTQEDRAFSTLLVNVSGKFFEYTLKGEISPGKINSVEQNDMLRK). N-linked (GlcNAc...) asparagine glycosylation occurs at Asn145. A helical transmembrane segment spans residues 176-196 (VTFDPEVFFNILLPPIIFHAG). Topologically, residues 197–210 (YSLKKRHFFRNLGS) are cytoplasmic. A helical membrane pass occupies residues 211–231 (ILAYAFLGTAVSCFIIGNLMY). At 232-251 (GVVKLMKIMGQLSDKFYYTD) the chain is on the lumenal side. A helical membrane pass occupies residues 252-272 (CLFFGAIISATDPVTVLAIFN). The Cytoplasmic portion of the chain corresponds to 273-277 (ELHAD). Residues 278 to 298 (VDLYALLFGESVLNDAVAIVL) traverse the membrane as a helical segment. Topologically, residues 299-322 (SSSIVAYQPAGLNTHAFDAAAFFK) are lumenal. Residues 323-343 (SVGIFLGIFSGSFTMGAVTGV) traverse the membrane as a helical segment. At 344-349 (NANVTK) the chain is on the cytoplasmic side. 2 helical membrane-spanning segments follow: residues 350-370 (FTKL…MSWS) and 371-391 (TFLL…FCGI). Over 392-414 (TQAHYTYNNLSVESRSRTKQLFE) the chain is Cytoplasmic. The chain crosses the membrane as a helical span at residues 415-435 (VLHFLAENFIFSYMGLALFTF). The Lumenal portion of the chain corresponds to 436–442 (QKHVFSP). The chain crosses the membrane as a helical span at residues 443-463 (IFIIGAFVAIFLGRAAHIYPL). The Cytoplasmic segment spans residues 464–474 (SFFLNLGRRHK). Residues 475–497 (IGWNFQHMMMFSGLRGAMAFALA) form a helical membrane-spanning segment. Over 498 to 513 (IRDTASYARQMMFTTT) the chain is Lumenal. A helical membrane pass occupies residues 514–534 (LLIVFFTVWIIGGGTTPMLSW). Required for trans-Golgi network localization stretches follow at residues 533 to 559 (SWLN…YFRV) and 563 to 568 (PDQDPP). The Cytoplasmic portion of the chain corresponds to 535-725 (LNIRVGVEEP…RLVFPLEDNA (191 aa)). Position 545 is a phosphoserine (Ser545). 2 disordered regions span residues 567–590 (PPPN…GNRT) and 669–714 (TVTA…SSRG). The span at 675–684 (SSSSHTASTS) shows a compositional bias: low complexity. A compositionally biased stretch (basic and acidic residues) spans 687-704 (GSRRTKSSSEEVLERDLG).

Belongs to the monovalent cation:proton antiporter 1 (CPA1) transporter (TC 2.A.36) family. In terms of assembly, interacts with SCAMP1, SCAMP2 and SCAMP5; may participate in its shuttling from trans-Golgi network to recycling endosomes. Post-translationally, N-glycosylated. Ubiquitously expressed.

The protein resides in the golgi apparatus. It localises to the trans-Golgi network membrane. The protein localises to the recycling endosome membrane. Its subcellular location is the cell membrane. The catalysed reaction is Na(+)(in) + H(+)(out) = Na(+)(out) + H(+)(in). It carries out the reaction K(+)(in) + H(+)(out) = K(+)(out) + H(+)(in). Its activity is regulated as follows. Inhibited by benzamil and quinine but not by amiloride. Golgi Na(+), K(+)/(H+) antiporter. Mediates the electoneutral influx of Na(+) or K(+) in exchange for H(+). May contribute to the regulation of Golgi apparatus volume and pH. In Homo sapiens (Human), this protein is Sodium/hydrogen exchanger 7 (SLC9A7).